A 331-amino-acid chain; its full sequence is Glycerophosphodiester phosphodiesterase 1 (331 aa).

Topologically, residues M1–L3 are cytoplasmic. The helical transmembrane segment at W4–V24 threads the bilayer. Over T25–S248 the chain is Lumenal. The region spanning V65–F331 is the GP-PDE domain. E97 and D99 together coordinate Mg(2+). N-linked (GlcNAc...) asparagine glycosylation occurs at N168. A Mg(2+)-binding site is contributed by D174. A helical transmembrane segment spans residues V249–C269. Residues G270–F331 are Cytoplasmic-facing.

The protein belongs to the glycerophosphoryl diester phosphodiesterase family. As to quaternary structure, interacts with PRAF2. Interacts with RGS16. Mg(2+) is required as a cofactor. Post-translationally, N-glycosylated. In terms of tissue distribution, detected in heart, brain, lung, liver, skeletal muscle, kidney, pituitary and testis.

It localises to the cell membrane. The protein localises to the cytoplasmic vesicle membrane. It catalyses the reaction sn-glycero-3-phospho-1D-myo-inositol + H2O = myo-inositol + sn-glycerol 3-phosphate + H(+). The enzyme catalyses 1-O-(1Z-octadecenyl)-sn-glycero-3-phospho-(N-5Z,8Z,11Z,14Z-eicosatetraenoyl)-ethanolamine + H2O = 1-O-(1Z-octadecenyl)-sn-glycero-3-phosphate + N-(5Z,8Z,11Z,14Z-eicosatetraenoyl)-ethanolamine + H(+). The catalysed reaction is 1-O-(1Z-octadecenyl)-sn-glycero-3-phospho-(N-9Z-octadecenoyl)-ethanolamine + H2O = 1-O-(1Z-octadecenyl)-sn-glycero-3-phosphate + N-(9Z-octadecenoyl) ethanolamine + H(+). It carries out the reaction 1-O-(1Z-octadecenyl)-sn-glycero-3-phospho-N-hexadecanoyl-ethanolamine + H2O = 1-O-(1Z-octadecenyl)-sn-glycero-3-phosphate + N-hexadecanoylethanolamine + H(+). It catalyses the reaction N-(4Z,7Z,10Z,13Z,16Z,19Z)-docosahexaenoyl-sn-glycero-3-phosphoethanolamine + H2O = N-(4Z,7Z,10Z,13Z,16Z,19Z)-docosahexaenoyl ethanolamine + sn-glycerol 3-phosphate + H(+). The enzyme catalyses N-eicosanoyl-sn-glycero-3-phosphoethanolamine + H2O = N-eicosanoyl ethanolamine + sn-glycerol 3-phosphate + H(+). The catalysed reaction is N-hexadecanoyl-sn-glycero-3-phosphoethanolamine + H2O = N-hexadecanoylethanolamine + sn-glycerol 3-phosphate + H(+). It carries out the reaction N-(9Z-octadecenoyl)-sn-glycero-3-phosphoethanolamine + H2O = N-(9Z-octadecenoyl) ethanolamine + sn-glycerol 3-phosphate + H(+). It catalyses the reaction N-(5Z,8Z,11Z,14Z-eicosatetraenoyl)-sn-glycero-3-phosphoethanolamine + H2O = N-(5Z,8Z,11Z,14Z-eicosatetraenoyl)-ethanolamine + sn-glycerol 3-phosphate + H(+). Its activity is regulated as follows. Inhibited by EDTA, calcium chloride, and zinc chloride. Enhanced by magnesium chloride. Glycerophosphodiester phosphodiesterase activity can be modulated by G-protein signaling pathways. Functionally, hydrolyzes the phosphodiester bond of glycerophosphodiesters such as glycerophosphoinositol (GroPIns) and glycerophosphoethanolamine (GroPEth), to yield a glycerol phosphate and an alcohol. Hydrolyzes glycerophospho-N-acylethanolamines to N-acylethanolamines in the brain and participates in bioactive N-acylethanolamine biosynthesis such as anandamide (an endocannabinoid), N-palmitoylethanolamine (an anti-inflammatory), and N-oleoylethanolamine (an anorexic). In addition, has a lysophospholipase D activity by hydrolyzing N-acyl-lysoplasmenylethanolamine (N-acyl-lysoPlsEt) to N-acylethanolamine. However lysophospholipase D activity is lower than glycerophosphodiester phosphodiesterase activity. Has little or no activity towards glycerophosphocholine. This Rattus norvegicus (Rat) protein is Glycerophosphodiester phosphodiesterase 1.